The chain runs to 134 residues: Global transcriptional regulator Spx (134 aa).

A disulfide bond links Cys-10 and Cys-13.

The protein belongs to the ArsC family. Spx subfamily. As to quaternary structure, interacts with the C-terminal domain of the alpha subunit of the RNAP.

Its subcellular location is the cytoplasm. Global transcriptional regulator that plays a key role in stress response and exerts either positive or negative regulation of genes. Acts by interacting with the C-terminal domain of the alpha subunit of the RNA polymerase (RNAP). This interaction can enhance binding of RNAP to the promoter region of target genes and stimulate their transcription, or block interaction of RNAP with activator. The chain is Global transcriptional regulator Spx from Streptococcus pyogenes serotype M6 (strain ATCC BAA-946 / MGAS10394).